A 184-amino-acid chain; its full sequence is LPS-assembly lipoprotein LptE (184 aa).

The N-terminal stretch at 1 to 19 (MRHRLFTLVLGLAVLITAG) is a signal peptide. Cys20 carries N-palmitoyl cysteine lipidation. A lipid anchor (S-diacylglycerol cysteine) is attached at Cys20.

This sequence belongs to the LptE lipoprotein family. In terms of assembly, component of the lipopolysaccharide transport and assembly complex. Interacts with LptD.

The protein resides in the cell outer membrane. Its function is as follows. Together with LptD, is involved in the assembly of lipopolysaccharide (LPS) at the surface of the outer membrane. Required for the proper assembly of LptD. Binds LPS and may serve as the LPS recognition site at the outer membrane. This chain is LPS-assembly lipoprotein LptE, found in Pectobacterium atrosepticum (strain SCRI 1043 / ATCC BAA-672) (Erwinia carotovora subsp. atroseptica).